The chain runs to 931 residues: Dual serine/threonine and tyrosine protein kinase (931 aa).

Residues 1 to 24 form a disordered region; that stretch reads MEGDAPQRVSERVSGPGPGGGGGG. Residues 397–424 adopt a coiled-coil conformation; sequence RKKENELYESLMNIANRKQEEMKDMICE. The region spanning 654-908 is the Protein kinase domain; the sequence is PKLGQELGRG…PLLGIVQPML (255 aa). ATP contacts are provided by residues 660–668 and K683; that span reads LGRGQYGVV. Catalysis depends on D779, which acts as the Proton acceptor.

Belongs to the protein kinase superfamily. Ser/Thr protein kinase family.

It localises to the cytoplasm. The protein resides in the cell membrane. Its subcellular location is the apical cell membrane. The protein localises to the basolateral cell membrane. It is found in the cell junction. It carries out the reaction L-seryl-[protein] + ATP = O-phospho-L-seryl-[protein] + ADP + H(+). The enzyme catalyses L-threonyl-[protein] + ATP = O-phospho-L-threonyl-[protein] + ADP + H(+). It catalyses the reaction L-tyrosyl-[protein] + ATP = O-phospho-L-tyrosyl-[protein] + ADP + H(+). In terms of biological role, acts as a positive regulator of ERK phosphorylation downstream of fibroblast growth factor-receptor activation. Involved in the regulation of both caspase-dependent apoptosis and caspase-independent cell death. In the skin, it plays a predominant role in suppressing caspase-dependent apoptosis in response to UV stress in a range of dermal cell types. This is Dual serine/threonine and tyrosine protein kinase (DSTYK) from Canis lupus familiaris (Dog).